Here is a 388-residue protein sequence, read N- to C-terminus: Succinate--CoA ligase [ADP-forming] subunit beta (388 aa).

An ATP-grasp domain is found at lysine 9–lysine 245. Residues lysine 46, glycine 53–glycine 55, glutamate 100, tyrosine 103, and glutamate 108 contribute to the ATP site. Mg(2+) is bound by residues asparagine 200 and aspartate 214. Substrate contacts are provided by residues asparagine 265 and glycine 322 to valine 324.

The protein belongs to the succinate/malate CoA ligase beta subunit family. Heterotetramer of two alpha and two beta subunits. It depends on Mg(2+) as a cofactor.

The enzyme catalyses succinate + ATP + CoA = succinyl-CoA + ADP + phosphate. It catalyses the reaction GTP + succinate + CoA = succinyl-CoA + GDP + phosphate. The protein operates within carbohydrate metabolism; tricarboxylic acid cycle; succinate from succinyl-CoA (ligase route): step 1/1. Succinyl-CoA synthetase functions in the citric acid cycle (TCA), coupling the hydrolysis of succinyl-CoA to the synthesis of either ATP or GTP and thus represents the only step of substrate-level phosphorylation in the TCA. The beta subunit provides nucleotide specificity of the enzyme and binds the substrate succinate, while the binding sites for coenzyme A and phosphate are found in the alpha subunit. This Neisseria meningitidis serogroup B (strain ATCC BAA-335 / MC58) protein is Succinate--CoA ligase [ADP-forming] subunit beta.